The primary structure comprises 56 residues: Protein hunchback (56 aa).

3 consecutive C2H2-type zinc fingers follow at residues 1-5, 11-33, and 39-56; these read HVRNH, HKCG…MKSH, and YRCA…SLKL.

This sequence belongs to the hunchback C2H2-type zinc-finger protein family.

Its subcellular location is the nucleus. Functionally, gap class segmentation protein that controls development of head structures. The chain is Protein hunchback (hb) from Bithynia tentaculata (Spire snail).